A 474-amino-acid chain; its full sequence is UDP-glycosyltransferase 71C2 (474 aa).

UDP-alpha-D-glucose contacts are provided by residues Ser-293, 352–354 (APQ), 369–377 (HCGWNSILE), and 391–394 (YAEQ).

The protein belongs to the UDP-glycosyltransferase family.

In terms of biological role, possesses low quercetin 3-O-glucosyltransferase, 7-O-glucosyltransferase and 3'-O-glucosyltransferase activities in vitro. Glucosylates other secondary metabolites in vitro like vanillin, trans-resveratrol, curumin and etoposide. The chain is UDP-glycosyltransferase 71C2 (UGT71C2) from Arabidopsis thaliana (Mouse-ear cress).